A 300-amino-acid chain; its full sequence is Merozoite surface protein 2 (300 aa).

A signal peptide spans 1–20 (MKVIKTLSIINFFIFVTFNI). Residues asparagine 22 and asparagine 36 are each glycosylated (N-linked (GlcNAc...) asparagine). Residues 44-226 (EESKPPTGAV…EQTESPELQS (183 aa)) form a polymorphic region region. Residues 51–58 (GAVAGSGA) form a 1; inverted repeat. The tract at residues 51 to 74 (GAVAGSGAGAGSGAGAVAGSGAGA) is 7 X 8 AA tandem repeats of G-S-G-A-G-A-V-A. A run of 5 repeats spans residues 61 to 68 (GSGAGAVA), 69 to 76 (GSGAGAVA), 77 to 84 (GSGAGAVA), 85 to 92 (GSGAGAVA), and 93 to 100 (GSGAGAVA). A 7; inverted repeat occupies 103–110 (GAVAGSGA). A disordered region spans residues 111 to 261 (GNGANPGADA…DSQKECTDGN (151 aa)). The segment covering 124–148 (PSTPATTTTTTTTNDAEASTSTSSE) has biased composition (low complexity). Residues 149–165 (NRNHNNAETNPKGKGEV) show a composition bias toward basic and acidic residues. Composition is skewed to polar residues over residues 167–193 (KPNQANKETQNNSNVQQDSQTKSNVPR) and 200–228 (KSPTAQPEQAENSAPTAEQTESPELQSAP). Asparagine 177 carries an N-linked (GlcNAc...) asparagine glycan. Residue asparagine 249 is glycosylated (N-linked (GlcNAc...) asparagine). Residues cysteine 257 and cysteine 265 are joined by a disulfide bond. N-linked (GlcNAc...) asparagine glycans are attached at residues asparagine 273 and asparagine 274. A lipid anchor (GPI-anchor amidated asparagine) is attached at asparagine 274. The propeptide at 275–300 (SSNIASINKFVVLISATLVLSFAIFI) is removed in mature form.

The protein localises to the cell membrane. In terms of biological role, may play a role in the merozoite attachment to the erythrocyte. The protein is Merozoite surface protein 2 of Plasmodium falciparum (isolate mad71 / Papua New Guinea).